The chain runs to 591 residues: PDZ and LIM domain protein 5 (591 aa).

Serine 2 bears the N-acetylserine mark. Serine 2 is subject to Phosphoserine. Residues 2 to 85 form the PDZ domain; sequence SNYNVSLVGP…SLNMTLQRAS (84 aa). Lysine 89 carries the post-translational modification N6-acetyllysine; alternate. Position 89 is an N6-succinyllysine; alternate (lysine 89). Lysine 89 is covalently cross-linked (Glycyl lysine isopeptide (Lys-Gly) (interchain with G-Cter in SUMO2); alternate). Phosphoserine occurs at positions 111, 134, and 137. 2 disordered regions span residues 125-240 and 255-334; these read YNKV…GPPR and THSD…SNRP. Positions 134–143 are enriched in polar residues; it reads SVSSPKVTSI. A compositionally biased stretch (low complexity) spans 144-161; that stretch reads PSPSSAFTPAHAATSSHA. Residues 162–174 show a composition bias toward pro residues; sequence SPPPVAAVTPPPL. 2 stretches are compositionally biased toward polar residues: residues 183–195 and 207–217; these read ANPSAAQCSSPPN and PTVTSVCSESA. A phosphoserine mark is found at serine 228 and serine 260. Basic and acidic residues-rich tracts occupy residues 258-273 and 293-304; these read DASKKRLIEDTEDWRP and EHLKESENDNAK. A compositionally biased stretch (low complexity) spans 310 to 329; that stretch reads PEPSQQSASPLSAAESLESP. Phosphoserine is present on residues serine 313 and serine 318. N6-acetyllysine is present on lysine 346. The interval 348–398 is disordered; that stretch reads VGSTSVKSPSWQRPNQAAPSTGRISNSASSSGTGAPMKPAVGPPQPSDQDT. Over residues 349-380 the composition is skewed to polar residues; sequence GSTSVKSPSWQRPNQAAPSTGRISNSASSSGT. Phosphoserine is present on residues serine 355 and serine 357. LIM zinc-binding domains lie at 413–472, 472–531, and 531–591; these read PMCA…FFAP, PECG…LFGT, and TICR…SVNF.

In terms of assembly, interacts with various PKC isoforms through the LIM domains. Interacts with actin and alpha-actinin through the PDZ domain. Interacts (via LIM domains) with SIPA1L1/SPAR; this interaction may occur preferentially with isoform 1. Detected in brain, in neurons, including in hippocampal neurons, and glial cells (at protein level). Detected in heart and skeletal muscle.

The protein localises to the postsynaptic density. The protein resides in the presynapse. It localises to the postsynapse. Its subcellular location is the cytoplasm. It is found in the cytosol. Its function is as follows. May play an important role in the heart development by scaffolding PKC to the Z-disk region. May play a role in the regulation of cardiomyocyte expansion. Isoforms lacking the LIM domains may negatively modulate the scaffolding activity of isoform 1. Overexpression promotes the development of heart hypertrophy. Contributes to the regulation of dendritic spine morphogenesis in neurons. May be required to restrain postsynaptic growth of excitatory synapses. Isoform 1, but not isoform 2, expression favors spine thinning and elongation. This Rattus norvegicus (Rat) protein is PDZ and LIM domain protein 5 (Pdlim5).